The following is a 160-amino-acid chain: Phosphopantetheine adenylyltransferase (160 aa).

Ser-9 is a binding site for substrate. ATP-binding positions include 9 to 10 (SF) and His-17. 3 residues coordinate substrate: Lys-41, Leu-73, and Lys-87. ATP-binding positions include 88–90 (GLR), Glu-98, and 123–129 (YGYLSSS).

The protein belongs to the bacterial CoaD family. Homohexamer. The cofactor is Mg(2+).

It is found in the cytoplasm. It catalyses the reaction (R)-4'-phosphopantetheine + ATP + H(+) = 3'-dephospho-CoA + diphosphate. Its pathway is cofactor biosynthesis; coenzyme A biosynthesis; CoA from (R)-pantothenate: step 4/5. Its function is as follows. Reversibly transfers an adenylyl group from ATP to 4'-phosphopantetheine, yielding dephospho-CoA (dPCoA) and pyrophosphate. This chain is Phosphopantetheine adenylyltransferase, found in Caldanaerobacter subterraneus subsp. tengcongensis (strain DSM 15242 / JCM 11007 / NBRC 100824 / MB4) (Thermoanaerobacter tengcongensis).